The primary structure comprises 1085 residues: Tudor domain-containing protein 7B (1085 aa).

In terms of domain architecture, HTH OST-type 1 spans 3-76 (DEELVKKMVR…SGEVMCHATT (74 aa)). Disordered regions lie at residues 112–183 (APLV…PEKR), 200–228 (RNPQ…SAPY), and 297–341 (PAKE…KALS). A compositionally biased stretch (polar residues) spans 203 to 216 (QHINVPSNLNENTT). The HTH OST-type 2 domain occupies 229 to 299 (SPKLVQSRLQ…PQELLLYPAK (71 aa)). A compositionally biased stretch (polar residues) spans 322-335 (TQRPSLTAKSNTPE). Positions 340–410 (LSPDLKQKLG…PKRAILYAKV (71 aa)) constitute an HTH OST-type 3 domain. Tudor domains are found at residues 496-554 (SPSP…FYRL) and 686-743 (RPFC…LLRD). Over residues 843 to 853 (NVPTATQTSSL) the composition is skewed to polar residues. A disordered region spans residues 843–888 (NVPTATQTSSLKTDRGDKALHTPKKTSPPLGSKSTPAGSPPERLSL).

Its subcellular location is the cytoplasm. Component of specific cytoplasmic RNA granules involved in post-transcriptional regulation of specific genes: probably acts by binding to specific mRNAs and regulating their translation. Probably required during spermatogenesis. In Danio rerio (Zebrafish), this protein is Tudor domain-containing protein 7B (tdrd7b).